Consider the following 180-residue polypeptide: Major urinary protein 17 (180 aa).

Positions Met1–Ala18 are cleaved as a signal peptide. A disulfide bond links Cys82 and Cys175.

This sequence belongs to the calycin superfamily. Lipocalin family. In terms of tissue distribution, because of their involvement in the coordination of social behavior, Mup proteins are thought to exhibit variable expression depending upon gender, age and status of the studied individuals. Expression may also be strain-specific: in strains C57BL/6J and 129S7, transcriptional support is lacking for Mup17.

The protein localises to the secreted. In terms of biological role, major urinary proteins (Mups) bind pheromones, thus stabilize them and allow slow release into the air from urine marks. May protect pheromones from oxidation. May also act as pheromones themselves. In this context, they play a role in the regulation of social behaviors, such as aggression, mating, pup-suckling, territory establishment and dominance. This is Major urinary protein 17 (Mup17) from Mus musculus (Mouse).